The primary structure comprises 48 residues: Large ribosomal subunit protein eL40 (48 aa).

It belongs to the eukaryotic ribosomal protein eL40 family.

The sequence is that of Large ribosomal subunit protein eL40 from Methanospirillum hungatei JF-1 (strain ATCC 27890 / DSM 864 / NBRC 100397 / JF-1).